The primary structure comprises 424 residues: Adenylosuccinate synthetase (424 aa).

GTP is bound by residues G12–K18 and G40–T42. Catalysis depends on D13, which acts as the Proton acceptor. The Mg(2+) site is built by D13 and G40. IMP-binding positions include D13 to K16, N38 to H41, T130, R144, N220, T235, and R299. H41 acts as the Proton donor in catalysis. V295–R301 contacts substrate. GTP contacts are provided by residues R301, K327–D329, and G412–G414.

It belongs to the adenylosuccinate synthetase family. In terms of assembly, homodimer. Mg(2+) serves as cofactor.

It localises to the cytoplasm. It carries out the reaction IMP + L-aspartate + GTP = N(6)-(1,2-dicarboxyethyl)-AMP + GDP + phosphate + 2 H(+). It participates in purine metabolism; AMP biosynthesis via de novo pathway; AMP from IMP: step 1/2. Plays an important role in the de novo pathway and in the salvage pathway of purine nucleotide biosynthesis. Catalyzes the first committed step in the biosynthesis of AMP from IMP. The protein is Adenylosuccinate synthetase of Aspergillus fumigatus (strain CBS 144.89 / FGSC A1163 / CEA10) (Neosartorya fumigata).